The primary structure comprises 392 residues: Putative cystathionine gamma-lyase (392 aa).

Positions 1-10 are enriched in polar residues; that stretch reads MSDSATTDSA. The disordered stretch occupies residues 1–41; it reads MSDSATTDSAGTGGERSASAPGDGTRAVRAGLPEPVKHEPT. Lysine 216 bears the N6-(pyridoxal phosphate)lysine mark.

Belongs to the trans-sulfuration enzymes family. It depends on pyridoxal 5'-phosphate as a cofactor.

The protein resides in the cytoplasm. It carries out the reaction L,L-cystathionine + H2O = 2-oxobutanoate + L-cysteine + NH4(+). It functions in the pathway amino-acid biosynthesis; L-cysteine biosynthesis; L-cysteine from L-homocysteine and L-serine: step 2/2. In Streptomyces coelicolor (strain ATCC BAA-471 / A3(2) / M145), this protein is Putative cystathionine gamma-lyase (cysA).